A 371-amino-acid polypeptide reads, in one-letter code: Protein NDRG2 (371 aa).

The disordered stretch occupies residues 1 to 21; the sequence is MAELQEVQITEEKPLLPGQTP. An N-acetylalanine modification is found at alanine 2. Threonine 20 bears the Phosphothreonine mark. A phosphoserine mark is found at serine 326 and serine 328. Threonine 330 bears the Phosphothreonine mark. The residue at position 332 (serine 332) is a Phosphoserine. A Phosphothreonine modification is found at threonine 334. A disordered region spans residues 334–371; sequence TSAASVDGNRSRSRTLSQSSESGTLSSGPPGHTMEVSC. Serine 335, serine 338, and serine 344 each carry phosphoserine. Positions 347-361 are enriched in low complexity; that stretch reads RTLSQSSESGTLSSG. Phosphothreonine is present on threonine 348. Phosphoserine is present on residues serine 350, serine 352, serine 353, and serine 355. At threonine 357 the chain carries Phosphothreonine. Serine 370 is modified (phosphoserine).

It belongs to the NDRG family. In terms of assembly, interacts with CTNNB1. As to expression, highly expressed in brain, heart, skeletal muscle and salivary gland, and moderately in kidney and liver. Expressed in dendritic cells, but not in other blood cells. Expression levels are low in pancreatic and liver cancer tissues; absent in meningioma. Expressed in low-grade gliomas but present at low levels in glioblastoma. Isoform 1 and isoform 2 are present in brain neurons and up-regulated in Alzheimer disease (at protein level).

The protein localises to the cytoplasm. It localises to the perinuclear region. It is found in the cell projection. The protein resides in the growth cone. Contributes to the regulation of the Wnt signaling pathway. Down-regulates CTNNB1-mediated transcriptional activation of target genes, such as CCND1, and may thereby act as tumor suppressor. May be involved in dendritic cell and neuron differentiation. The protein is Protein NDRG2 (NDRG2) of Homo sapiens (Human).